The chain runs to 249 residues: 1-(5-phosphoribosyl)-5-[(5-phosphoribosylamino)methylideneamino] imidazole-4-carboxamide isomerase (249 aa).

Catalysis depends on D10, which acts as the Proton acceptor. The active-site Proton donor is the D136.

The protein belongs to the HisA/HisF family.

The protein resides in the cytoplasm. It carries out the reaction 1-(5-phospho-beta-D-ribosyl)-5-[(5-phospho-beta-D-ribosylamino)methylideneamino]imidazole-4-carboxamide = 5-[(5-phospho-1-deoxy-D-ribulos-1-ylimino)methylamino]-1-(5-phospho-beta-D-ribosyl)imidazole-4-carboxamide. It functions in the pathway amino-acid biosynthesis; L-histidine biosynthesis; L-histidine from 5-phospho-alpha-D-ribose 1-diphosphate: step 4/9. The chain is 1-(5-phosphoribosyl)-5-[(5-phosphoribosylamino)methylideneamino] imidazole-4-carboxamide isomerase from Symbiobacterium thermophilum (strain DSM 24528 / JCM 14929 / IAM 14863 / T).